Consider the following 665-residue polypeptide: MEDIVDDVRSSTYQVVENDACGTGKANLLSLSLLYLRSTLKWMIELDAGEAVAIRFVPDPISGHYGDAEVFGAPLVAGSQERWYTFGNEAKFAISSWGGAEVEILGAASTEYMADEPSPTYTYCTNLHLNLERARIRAREQLRTDPSLQKILEDMDVSERTIPASYEQHGAGASGSDLYRAAGQGPRVMIVGPESAGKTSLIKFLANYALRSPALANVKEGDDASRRAKHRSEPEIHPGPDVAHDDDDDDDVENRKDDEESGINDMKHPKNRKKHSSADSQAKKTLSDITGWWPMIVALDPSEGAVPVPGCVSAIPLTPMPTNWLPSPSPALPYGITTQTTGTLPPSVSTVQSVMPISLWMGKENVRENERHSRRVIDWLAYYIEKRLVKDWRARMSGLLLDMPGVITADARTRYGFIQYCVRAFKIDTIVVLGHEKLNLELTRIYANDTSGHAPRIVKVPRSGGAVEVDEVYKQKLHDLQIRSYFYGMPPALTKEAAVTSMSMNDENTPASIPAGLDEHLGAVPTLSPYSTTIPLDLLSIYRVGQDRVAPSSALPIGAERVLSEMQVVKLDPVNSSNDMSMLLHSVLALVEPPPRNQSKDETSSPDDPGHHDYEDDELLGAAILGFVHVSDMDLHRKKLTVLSPKPGKLPSTTALIGNLQWQDM.

ATP is bound by residues Lys91 and 195 to 200 (SAGKTS). Disordered stretches follow at residues 218-283 (VKEG…SQAK) and 593-615 (PPPRNQSKDETSSPDDPGHHDYE). Composition is skewed to basic and acidic residues over residues 219-238 (KEGDDASRRAKHRSEPEIHP) and 598-614 (QSKDETSSPDDPGHHDY).

The protein belongs to the Clp1 family. Clp1 subfamily. In terms of assembly, component of a pre-mRNA cleavage factor complex. Interacts directly with PCF11.

It is found in the nucleus. Required for endonucleolytic cleavage during polyadenylation-dependent pre-mRNA 3'-end formation. This is mRNA cleavage and polyadenylation factor CLP1 from Malassezia globosa (strain ATCC MYA-4612 / CBS 7966) (Dandruff-associated fungus).